Here is a 48-residue protein sequence, read N- to C-terminus: DNA-directed RNA polymerase subunit Rpo12 (48 aa).

4 residues coordinate Zn(2+): Cys-6, Cys-9, Cys-26, and Cys-29.

This sequence belongs to the archaeal Rpo12/eukaryotic RPC10 RNA polymerase subunit family. Part of the 13-subunit RNA polymerase. The cofactor is Zn(2+).

Its subcellular location is the cytoplasm. The catalysed reaction is RNA(n) + a ribonucleoside 5'-triphosphate = RNA(n+1) + diphosphate. DNA-dependent RNA polymerase (RNAP) catalyzes the transcription of DNA into RNA using the four ribonucleoside triphosphates as substrates. The polypeptide is DNA-directed RNA polymerase subunit Rpo12 (Sulfolobus acidocaldarius (strain ATCC 33909 / DSM 639 / JCM 8929 / NBRC 15157 / NCIMB 11770)).